Consider the following 358-residue polypeptide: Leukotriene B4 receptor 2 (358 aa).

The Extracellular portion of the chain corresponds to M1–T24. An N-linked (GlcNAc...) asparagine glycan is attached at N10. The chain crosses the membrane as a helical span at residues A25–L45. The Cytoplasmic segment spans residues A46–L60. Residues V61 to F81 traverse the membrane as a helical segment. Residues L82–A96 are Extracellular-facing. Residues V97–L117 traverse the membrane as a helical segment. Residues Q118 to R140 are Cytoplasmic-facing. Residues L141 to H161 traverse the membrane as a helical segment. Residues L162–E185 lie on the Extracellular side of the membrane. A helical membrane pass occupies residues T186 to A206. Residues R207–R224 are Cytoplasmic-facing. The helical transmembrane segment at L225–L245 threads the bilayer. At L246–A275 the chain is on the extracellular side. A helical membrane pass occupies residues L276–L296. The Cytoplasmic segment spans residues P297–L358. Positions S311–L358 are disordered. Residues Q338–G348 show a composition bias toward gly residues. The span at M349–L358 shows a compositional bias: basic and acidic residues.

This sequence belongs to the G-protein coupled receptor 1 family. Widely expressed.

The protein localises to the cell membrane. Its function is as follows. Low-affinity receptor for leukotrienes including leukotriene B4. Mediates chemotaxis of granulocytes and macrophages. The response is mediated via G-proteins that activate a phosphatidylinositol-calcium second messenger system. The rank order of affinities for the leukotrienes is LTB4 &gt; 12-epi-LTB4 &gt; LTB5 &gt; LTB3. The sequence is that of Leukotriene B4 receptor 2 (LTB4R2) from Homo sapiens (Human).